Consider the following 354-residue polypeptide: UDP-3-O-acylglucosamine N-acyltransferase (354 aa).

The Proton acceptor role is filled by H250.

Belongs to the transferase hexapeptide repeat family. LpxD subfamily. As to quaternary structure, homotrimer.

It catalyses the reaction a UDP-3-O-[(3R)-3-hydroxyacyl]-alpha-D-glucosamine + a (3R)-hydroxyacyl-[ACP] = a UDP-2-N,3-O-bis[(3R)-3-hydroxyacyl]-alpha-D-glucosamine + holo-[ACP] + H(+). It functions in the pathway bacterial outer membrane biogenesis; LPS lipid A biosynthesis. Functionally, catalyzes the N-acylation of UDP-3-O-acylglucosamine using 3-hydroxyacyl-ACP as the acyl donor. Is involved in the biosynthesis of lipid A, a phosphorylated glycolipid that anchors the lipopolysaccharide to the outer membrane of the cell. The polypeptide is UDP-3-O-acylglucosamine N-acyltransferase (Methylococcus capsulatus (strain ATCC 33009 / NCIMB 11132 / Bath)).